The sequence spans 59 residues: uncharacterized protein (59 aa).

This is an uncharacterized protein from Acidianus convivator (ATV).